A 150-amino-acid polypeptide reads, in one-letter code: MKTRRQMKIQEIINNQVIHTQEELAELLRKAGFDVTQATVSRDIKEMGLIKVPTSEDDYRYAVPGTAQPLSTPDRLKRRLRETVVTVNDSENLVVLRTIPGNAQALASLIDHSNWEEVIGTVAGDDTILLVVKPAGAVPSVRERIAKLMQ.

This sequence belongs to the ArgR family.

It localises to the cytoplasm. Its pathway is amino-acid biosynthesis; L-arginine biosynthesis [regulation]. Functionally, regulates arginine biosynthesis genes. In Desulfitobacterium hafniense (strain DSM 10664 / DCB-2), this protein is Arginine repressor.